A 692-amino-acid chain; its full sequence is UvrABC system protein B (692 aa).

The region spanning 32-187 is the Helicase ATP-binding domain; it reads ENIENGEKAQ…LLNDLVGIQF (156 aa). 45-52 is an ATP binding site; sequence GATGTGKT. A Beta-hairpin motif is present at residues 98 to 121; that stretch reads YYDYYQPEAYVPSSDTYIEKDSSV. The Helicase C-terminal domain maps to 436-631; sequence QIDDLVGEIH…TIKKEIRDLI (196 aa). Positions 656–691 constitute a UVR domain; sequence KALVKKLEKEMQQAAAALDFEGAAQLRDMVLELRAM.

Belongs to the UvrB family. Forms a heterotetramer with UvrA during the search for lesions. Interacts with UvrC in an incision complex.

It is found in the cytoplasm. In terms of biological role, the UvrABC repair system catalyzes the recognition and processing of DNA lesions. A damage recognition complex composed of 2 UvrA and 2 UvrB subunits scans DNA for abnormalities. Upon binding of the UvrA(2)B(2) complex to a putative damaged site, the DNA wraps around one UvrB monomer. DNA wrap is dependent on ATP binding by UvrB and probably causes local melting of the DNA helix, facilitating insertion of UvrB beta-hairpin between the DNA strands. Then UvrB probes one DNA strand for the presence of a lesion. If a lesion is found the UvrA subunits dissociate and the UvrB-DNA preincision complex is formed. This complex is subsequently bound by UvrC and the second UvrB is released. If no lesion is found, the DNA wraps around the other UvrB subunit that will check the other stand for damage. The polypeptide is UvrABC system protein B (Lactococcus lactis subsp. cremoris (strain SK11)).